The primary structure comprises 372 residues: MVATPLPPTQSPRHPSLQELSLSELQTWLDELAERIITGETLDRATAIALTEIEGEEKILALCAAADRVRQACCGNTVDLCSIVNIKSGNCSENCSFCAQSAHHPGQDSPIYGMKTPEDILAQARAAAAAGAKRFCLVSQGRGPKYNSPKSTEFEQILATVRAIIAETNIKPCCALGEVTPEQAQALKEAGVSRYNHNLESSENFFPEVATTHSWRDRVETIKTLKAAGIQACTGGILGLGESWQDRVDLALALRELEVESVPLNLLNPRAGTLLGEQSKLDPFTALKAIAIFRLILPQQIIRYAGGREAVMGELQALGLKAGINAMLVGHYLTTMGQPPEQDHAMLAGLGLQGGEAPIPGEYVRASQVREL.

Positions 73–308 (CCGNTVDLCS…QQIIRYAGGR (236 aa)) constitute a Radical SAM core domain. 3 residues coordinate [4Fe-4S] cluster: cysteine 91, cysteine 95, and cysteine 98. [2Fe-2S] cluster contacts are provided by cysteine 136, cysteine 173, cysteine 233, and arginine 303.

Belongs to the radical SAM superfamily. Biotin synthase family. Homodimer. It depends on [4Fe-4S] cluster as a cofactor. Requires [2Fe-2S] cluster as cofactor.

It carries out the reaction (4R,5S)-dethiobiotin + (sulfur carrier)-SH + 2 reduced [2Fe-2S]-[ferredoxin] + 2 S-adenosyl-L-methionine = (sulfur carrier)-H + biotin + 2 5'-deoxyadenosine + 2 L-methionine + 2 oxidized [2Fe-2S]-[ferredoxin]. It functions in the pathway cofactor biosynthesis; biotin biosynthesis; biotin from 7,8-diaminononanoate: step 2/2. Functionally, catalyzes the conversion of dethiobiotin (DTB) to biotin by the insertion of a sulfur atom into dethiobiotin via a radical-based mechanism. This is Biotin synthase from Cyanothece sp. (strain PCC 7425 / ATCC 29141).